The sequence spans 317 residues: Protoheme IX farnesyltransferase (317 aa).

Helical transmembrane passes span 44–64 (IGLI…ANTF), 93–113 (HASV…WVLC), 116–136 (VLAG…YTKY), 143–163 (LNIV…WAVI), 178–198 (AIVL…ALAM), 221–241 (VTRQ…LLIP), 243–263 (ASWI…VMAV), and 288–308 (LAVY…TIGG).

It belongs to the UbiA prenyltransferase family. Protoheme IX farnesyltransferase subfamily.

The protein resides in the cell membrane. It catalyses the reaction heme b + (2E,6E)-farnesyl diphosphate + H2O = Fe(II)-heme o + diphosphate. The protein operates within porphyrin-containing compound metabolism; heme O biosynthesis; heme O from protoheme: step 1/1. Its function is as follows. Converts heme B (protoheme IX) to heme O by substitution of the vinyl group on carbon 2 of heme B porphyrin ring with a hydroxyethyl farnesyl side group. The chain is Protoheme IX farnesyltransferase from Corynebacterium diphtheriae (strain ATCC 700971 / NCTC 13129 / Biotype gravis).